Here is a 272-residue protein sequence, read N- to C-terminus: NAD kinase (272 aa).

Residue aspartate 50 is the Proton acceptor of the active site. NAD(+)-binding positions include 50–51 (DG), 126–127 (NE), arginine 152, aspartate 154, 165–170 (TAYNKS), and alanine 189.

It belongs to the NAD kinase family. It depends on a divalent metal cation as a cofactor.

The protein resides in the cytoplasm. It carries out the reaction NAD(+) + ATP = ADP + NADP(+) + H(+). In terms of biological role, involved in the regulation of the intracellular balance of NAD and NADP, and is a key enzyme in the biosynthesis of NADP. Catalyzes specifically the phosphorylation on 2'-hydroxyl of the adenosine moiety of NAD to yield NADP. The protein is NAD kinase of Streptococcus pneumoniae (strain Hungary19A-6).